The chain runs to 239 residues: tRNA (guanine-N(7)-)-methyltransferase (239 aa).

S-adenosyl-L-methionine-binding residues include Glu69, Glu94, Asp121, and Asp144. Asp144 is an active-site residue. Lys148 lines the substrate pocket. Residues 150 to 155 (RHNKRR) form an interaction with RNA region. Residues Asp180 and 217–220 (TKFE) each bind substrate.

The protein belongs to the class I-like SAM-binding methyltransferase superfamily. TrmB family. In terms of assembly, monomer.

It carries out the reaction guanosine(46) in tRNA + S-adenosyl-L-methionine = N(7)-methylguanosine(46) in tRNA + S-adenosyl-L-homocysteine. Its pathway is tRNA modification; N(7)-methylguanine-tRNA biosynthesis. Catalyzes the formation of N(7)-methylguanine at position 46 (m7G46) in tRNA. This is tRNA (guanine-N(7)-)-methyltransferase from Serratia proteamaculans (strain 568).